The chain runs to 84 residues: UPF0457 protein BALH_2270 (84 aa).

It belongs to the UPF0457 family.

In Bacillus thuringiensis (strain Al Hakam), this protein is UPF0457 protein BALH_2270.